Here is a 336-residue protein sequence, read N- to C-terminus: Phosphate acyltransferase (336 aa).

It belongs to the PlsX family. In terms of assembly, homodimer. Probably interacts with PlsY.

Its subcellular location is the cytoplasm. It carries out the reaction a fatty acyl-[ACP] + phosphate = an acyl phosphate + holo-[ACP]. It participates in lipid metabolism; phospholipid metabolism. Catalyzes the reversible formation of acyl-phosphate (acyl-PO(4)) from acyl-[acyl-carrier-protein] (acyl-ACP). This enzyme utilizes acyl-ACP as fatty acyl donor, but not acyl-CoA. This Pseudomonas putida (strain ATCC 47054 / DSM 6125 / CFBP 8728 / NCIMB 11950 / KT2440) protein is Phosphate acyltransferase.